Here is a 92-residue protein sequence, read N- to C-terminus: MKTILSMLIFVALFAAIVGNRWNLGYGIPHKQVKLPNGQLCKEPGDSCSKRDECCKADDQKTYSSGCAQTWSAMEGGFVRECYICAVESSMC.

The N-terminal stretch at 1 to 19 is a signal peptide; sequence MKTILSMLIFVALFAAIVG. 4 cysteine pairs are disulfide-bonded: Cys-41/Cys-55, Cys-48/Cys-67, Cys-54/Cys-82, and Cys-85/Cys-92.

Belongs to the neurotoxin 21 family. Expressed by the venom gland.

The protein resides in the secreted. Its function is as follows. Potent insecticidal toxin with probable ion channel impairing activity. In vivo, reversibly paralyzes all flies within 30 minutes, even at low dose (0.3 nmol/g). The polypeptide is U21-hexatoxin-Hi1a (Hadronyche infensa (Fraser island funnel-web spider)).